The following is a 148-amino-acid chain: Large ribosomal subunit protein bL9 (148 aa).

Belongs to the bacterial ribosomal protein bL9 family.

Functionally, binds to the 23S rRNA. The polypeptide is Large ribosomal subunit protein bL9 (Bifidobacterium animalis subsp. lactis (strain AD011)).